A 445-amino-acid polypeptide reads, in one-letter code: Probable glycine dehydrogenase (decarboxylating) subunit 1 (445 aa).

It belongs to the GcvP family. N-terminal subunit subfamily. In terms of assembly, the glycine cleavage system is composed of four proteins: P, T, L and H. In this organism, the P 'protein' is a heterodimer of two subunits.

It carries out the reaction N(6)-[(R)-lipoyl]-L-lysyl-[glycine-cleavage complex H protein] + glycine + H(+) = N(6)-[(R)-S(8)-aminomethyldihydrolipoyl]-L-lysyl-[glycine-cleavage complex H protein] + CO2. The glycine cleavage system catalyzes the degradation of glycine. The P protein binds the alpha-amino group of glycine through its pyridoxal phosphate cofactor; CO(2) is released and the remaining methylamine moiety is then transferred to the lipoamide cofactor of the H protein. In Anaeromyxobacter dehalogenans (strain 2CP-1 / ATCC BAA-258), this protein is Probable glycine dehydrogenase (decarboxylating) subunit 1.